Consider the following 1070-residue polypeptide: DNA-directed RNA polymerase subunit beta (1070 aa).

The protein belongs to the RNA polymerase beta chain family. In terms of assembly, in plastids the minimal PEP RNA polymerase catalytic core is composed of four subunits: alpha, beta, beta', and beta''. When a (nuclear-encoded) sigma factor is associated with the core the holoenzyme is formed, which can initiate transcription.

The protein localises to the plastid. It is found in the chloroplast. It catalyses the reaction RNA(n) + a ribonucleoside 5'-triphosphate = RNA(n+1) + diphosphate. In terms of biological role, DNA-dependent RNA polymerase catalyzes the transcription of DNA into RNA using the four ribonucleoside triphosphates as substrates. This chain is DNA-directed RNA polymerase subunit beta, found in Nicotiana tomentosiformis (Tobacco).